A 445-amino-acid polypeptide reads, in one-letter code: Probable D-serine dehydratase (445 aa).

K116 is subject to N6-(pyridoxal phosphate)lysine.

The protein belongs to the serine/threonine dehydratase family. DsdA subfamily. Requires pyridoxal 5'-phosphate as cofactor.

The enzyme catalyses D-serine = pyruvate + NH4(+). This chain is Probable D-serine dehydratase, found in Bacillus mycoides (strain KBAB4) (Bacillus weihenstephanensis).